The chain runs to 332 residues: Nucleoid-associated protein VVA0877 (332 aa).

It belongs to the YejK family.

The protein resides in the cytoplasm. It localises to the nucleoid. The protein is Nucleoid-associated protein VVA0877 of Vibrio vulnificus (strain YJ016).